The following is a 429-amino-acid chain: Chaperone SurA (429 aa).

The first 19 residues, 1–19 (MKKTLLALLIASVMQSALA), serve as a signal peptide directing secretion. PpiC domains are found at residues 172 to 273 (RTEY…KLVD) and 283 to 381 (VEQY…LVEG).

The protein localises to the periplasm. The enzyme catalyses [protein]-peptidylproline (omega=180) = [protein]-peptidylproline (omega=0). Its function is as follows. Chaperone involved in the correct folding and assembly of outer membrane proteins. Recognizes specific patterns of aromatic residues and the orientation of their side chains, which are found more frequently in integral outer membrane proteins. May act in both early periplasmic and late outer membrane-associated steps of protein maturation. The polypeptide is Chaperone SurA (Chromobacterium violaceum (strain ATCC 12472 / DSM 30191 / JCM 1249 / CCUG 213 / NBRC 12614 / NCIMB 9131 / NCTC 9757 / MK)).